A 290-amino-acid polypeptide reads, in one-letter code: Lipoyl synthase (290 aa).

Positions 44, 49, 55, 70, 74, 77, and 281 each coordinate [4Fe-4S] cluster. Residues 56-270 (WRCGTATFMI…KQIGLEKGFS (215 aa)) enclose the Radical SAM core domain.

The protein belongs to the radical SAM superfamily. Lipoyl synthase family. The cofactor is [4Fe-4S] cluster.

The protein resides in the cytoplasm. It carries out the reaction [[Fe-S] cluster scaffold protein carrying a second [4Fe-4S](2+) cluster] + N(6)-octanoyl-L-lysyl-[protein] + 2 oxidized [2Fe-2S]-[ferredoxin] + 2 S-adenosyl-L-methionine + 4 H(+) = [[Fe-S] cluster scaffold protein] + N(6)-[(R)-dihydrolipoyl]-L-lysyl-[protein] + 4 Fe(3+) + 2 hydrogen sulfide + 2 5'-deoxyadenosine + 2 L-methionine + 2 reduced [2Fe-2S]-[ferredoxin]. The protein operates within protein modification; protein lipoylation via endogenous pathway; protein N(6)-(lipoyl)lysine from octanoyl-[acyl-carrier-protein]: step 2/2. Functionally, catalyzes the radical-mediated insertion of two sulfur atoms into the C-6 and C-8 positions of the octanoyl moiety bound to the lipoyl domains of lipoate-dependent enzymes, thereby converting the octanoylated domains into lipoylated derivatives. The sequence is that of Lipoyl synthase from Treponema denticola (strain ATCC 35405 / DSM 14222 / CIP 103919 / JCM 8153 / KCTC 15104).